The following is a 164-amino-acid chain: OV-17 antigen (164 aa).

Residues 1-16 (MKFVILLTIGLLVVAA) form the signal peptide. The tract at residues 24–43 (QQQQQQQQQRDEREIPPFLE) is disordered.

It belongs to the SXP/RAL-2 family. In terms of tissue distribution, high levels in the hypodermal layer of the adult female.

The sequence is that of OV-17 antigen (OV17) from Onchocerca volvulus.